The primary structure comprises 122 residues: MIQQESRLKVADNSGAREILTIKVLGGSGRKFAGVGDMIVATVKQAIPGGNVKKGDVIKAVIVRTVSDVRRADGSYINFDENAAVIVKDDKSPVGTRIFGPVARELRDNDYMRIVSLAPEVL.

This sequence belongs to the universal ribosomal protein uL14 family. Part of the 50S ribosomal subunit. Forms a cluster with proteins L3 and L19. In the 70S ribosome, L14 and L19 interact and together make contacts with the 16S rRNA in bridges B5 and B8.

In terms of biological role, binds to 23S rRNA. Forms part of two intersubunit bridges in the 70S ribosome. This chain is Large ribosomal subunit protein uL14, found in Leuconostoc mesenteroides subsp. mesenteroides (strain ATCC 8293 / DSM 20343 / BCRC 11652 / CCM 1803 / JCM 6124 / NCDO 523 / NBRC 100496 / NCIMB 8023 / NCTC 12954 / NRRL B-1118 / 37Y).